A 348-amino-acid polypeptide reads, in one-letter code: Rhodopsin (348 aa).

Met1 bears the N-acetylmethionine mark. The Extracellular segment spans residues 1 to 36; the sequence is MNGTEGPNFYVPFSNKTGVVRSPFEYPQYYLAEPWQ. N-linked (GlcNAc...) asparagine glycosylation is found at Asn2 and Asn15. The helical transmembrane segment at 37-61 threads the bilayer; it reads FSMLAAYMFLLIVLGFPINFLTLYV. The Cytoplasmic portion of the chain corresponds to 62-73; sequence TVQHKKLRTPLN. The helical transmembrane segment at 74–96 threads the bilayer; it reads YILLNLAVADLFMVFGGFTTTLY. Topologically, residues 97-110 are extracellular; the sequence is TSLHGYFVFGPTGC. Cys110 and Cys187 are joined by a disulfide. The helical transmembrane segment at 111 to 133 threads the bilayer; sequence NVEGFFATLGGEIALWSLVVLAI. The short motif at 134 to 136 is the 'Ionic lock' involved in activated form stabilization element; it reads ERY. The Cytoplasmic portion of the chain corresponds to 134–152; it reads ERYVVVCKPMSNFRFGENH. The chain crosses the membrane as a helical span at residues 153 to 173; the sequence is AIMGVAFTWVMALACAAPPLA. Residues 174–202 lie on the Extracellular side of the membrane; the sequence is GWSRYIPEGMQCSCGIDYYTLKPEVNNES. Glu201 lines the Zn(2+) pocket. The chain crosses the membrane as a helical span at residues 203-224; it reads FVIYMFVVHFTIPMIVIFFCYG. The Cytoplasmic portion of the chain corresponds to 225–252; sequence QLVFTVKEAAAQQQESATTQKAEKEVTR. A helical membrane pass occupies residues 253–274; sequence MVIIMVIAFLICWVPYASVAFY. Over 275 to 286 the chain is Extracellular; the sequence is IFTHQGSNFGPI. Gln279 contacts Zn(2+). Residues 287–308 form a helical membrane-spanning segment; that stretch reads FMTLPAFFAKSASIYNPVIYIM. Lys296 is subject to N6-(retinylidene)lysine. Residues 309–348 lie on the Cytoplasmic side of the membrane; that stretch reads MNKQFRNCMLTTICCGKNPFAEEEGATTVSKTETSQVAPA. 2 S-palmitoyl cysteine lipidation sites follow: Cys322 and Cys323. The interval 330–348 is interaction with SAG; that stretch reads EEEGATTVSKTETSQVAPA. Residues Thr335 and Thr336 each carry the phosphothreonine modification. Phosphoserine is present on Ser338. A phosphothreonine mark is found at Thr340 and Thr342. A Phosphoserine modification is found at Ser343.

The protein belongs to the G-protein coupled receptor 1 family. Opsin subfamily. In terms of assembly, homodimer. May form a complex composed of RHO, GRK1 and RCVRN in a Ca(2+)-dependent manner; RCVRN prevents the interaction between GRK1 and RHO. Interacts with GRK1. Interacts (phosphorylated form) with SAG. Interacts with GNAT1. Interacts with GNAT3. SAG and G-proteins compete for a common binding site. Interacts with PRCD; the interaction promotes PRCD stability. Forms a complex with ASAP1 and ARF4. Forms a complex with ASAP1, RAB11A, Rabin8/RAB3IP, ARF4 and RAB11FIP3; the complex regulates Golgi-to-cilia rhodopsin/RHO transport in photoreceptors. In terms of processing, phosphorylated on some or all of the serine and threonine residues present in the C-terminal region. Post-translationally, contains one covalently linked retinal chromophore. Upon light absorption, the covalently bound 11-cis-retinal is converted to all-trans-retinal. After hydrolysis of the Schiff base and release of the covalently bound all-trans-retinal, active rhodopsin is regenerated by binding of a fresh molecule of 11-cis-retinal.

The protein resides in the membrane. Its subcellular location is the cell projection. It localises to the cilium. The protein localises to the photoreceptor outer segment. In terms of biological role, photoreceptor required for image-forming vision at low light intensity. Required for photoreceptor cell viability after birth. Light-induced isomerization of 11-cis to all-trans retinal triggers a conformational change that activates signaling via G-proteins. Subsequent receptor phosphorylation mediates displacement of the bound G-protein alpha subunit by the arrestin SAG and terminates signaling. This is Rhodopsin (RHO) from Trichechus manatus (Caribbean manatee).